The chain runs to 87 residues: Apolipoprotein C-I (87 aa).

The N-terminal stretch at methionine 1 to alanine 26 is a signal peptide.

It belongs to the apolipoprotein C1 family.

The protein resides in the secreted. Inhibitor of lipoprotein binding to the low density lipoprotein (LDL) receptor, LDL receptor-related protein, and very low density lipoprotein (VLDL) receptor. Associates with high density lipoproteins (HDL) and the triacylglycerol-rich lipoproteins in the plasma and makes up about 10% of the protein of the VLDL and 2% of that of HDL. Appears to interfere directly with fatty acid uptake and is also the major plasma inhibitor of cholesteryl ester transfer protein (CETP). Binds free fatty acids and reduces their intracellular esterification. Modulates the interaction of APOE with beta-migrating VLDL and inhibits binding of beta-VLDL to the LDL receptor-related protein. The sequence is that of Apolipoprotein C-I (APOC1) from Pteropus vampyrus (Large flying fox).